A 3503-amino-acid polypeptide reads, in one-letter code: Protein dachsous (3503 aa).

Positions 1–20 (MLRSSLLILLAIVLLGSSQA) are cleaved as a signal peptide. The Extracellular segment spans residues 21–3045 (ASHDQERERK…SSSGSIGDWA (3025 aa)). 14 Cadherin domains span residues 22 to 121 (SHDQ…APTF), 122 to 233 (PQTS…QPIF), 234 to 340 (NQSR…QPTI), 345 to 451 (LSDD…PPEF), 452 to 558 (EQDL…EPIF), 559 to 662 (DQSF…RPVF), 663 to 774 (YPRE…PPIF), 775 to 878 (EKAR…APEF), 879 to 983 (EASM…PPVF), 984 to 1100 (EKDE…DPKF), 1101 to 1203 (QKSK…APEI), 1205 to 1312 (DPQE…RPTF), 1313 to 1432 (TSSS…APEW), and 1433 to 1549 (PQDP…APHF). N-linked (GlcNAc...) asparagine glycosylation is found at asparagine 220 and asparagine 234. Serine 236 is modified (phosphoserine). N-linked (GlcNAc...) asparagine glycosylation is found at asparagine 245, asparagine 381, and asparagine 416. N-linked (GlcNAc...) asparagine glycosylation is found at asparagine 564, asparagine 594, and asparagine 743. Residues asparagine 966, asparagine 991, asparagine 1006, asparagine 1029, asparagine 1143, and asparagine 1236 are each glycosylated (N-linked (GlcNAc...) asparagine). N-linked (GlcNAc...) asparagine glycans are attached at residues asparagine 1453, asparagine 1479, asparagine 1524, and asparagine 1553. 13 Cadherin domains span residues 1556–1666 (GGKT…PPRF), 1667–1794 (LQAV…SPEF), 1796–1899 (PGSC…APRF), 1900–2004 (KLSK…RPIF), 2005–2111 (ERYP…TPVL), 2114–2269 (QNET…SPKF), 2270–2375 (SQKQ…QPTF), 2375–2479 (FPPN…APVF), 2489–2595 (AILP…RSQF), 2596–2699 (LQNQ…FPIF), 2701–2809 (RSAK…EPKF), 2810–2916 (PLTE…TPQF), and 2919–3028 (RTYR…HPGT). 3 N-linked (GlcNAc...) asparagine glycosylation sites follow: asparagine 1700, asparagine 1884, and asparagine 1940. N-linked (GlcNAc...) asparagine glycosylation is present at asparagine 2115. The segment at 2193–2225 (GRALHYEEEIDESSEEDPNNSTRSQRALTSSSF) is disordered. The segment covering 2200–2210 (EEIDESSEEDP) has biased composition (acidic residues). 2 N-linked (GlcNAc...) asparagine glycosylation sites follow: asparagine 2211 and asparagine 2212. Residues 2211–2225 (NNSTRSQRALTSSSF) are compositionally biased toward polar residues. N-linked (GlcNAc...) asparagine glycans are attached at residues asparagine 2421, asparagine 2511, asparagine 2520, asparagine 2547, asparagine 2588, and asparagine 2678. Asparagine 2845 and asparagine 2967 each carry an N-linked (GlcNAc...) asparagine glycan. The chain crosses the membrane as a helical span at residues 3046-3066 (IGLLVAFLLVLCAAAGIFLFI). The Cytoplasmic segment spans residues 3067-3503 (HMRSRKPRNA…SQRGNVGTRM (437 aa)). Disordered regions lie at residues 3114–3195 (AGAA…GRIS), 3360–3404 (LSEH…IPPP), and 3431–3503 (LPRS…GTRM). Low complexity-rich tracts occupy residues 3133-3159 (GAHA…SGRG) and 3363-3372 (HSGSGASSSA). Pro residues predominate over residues 3391–3404 (KPPPSAPPTHIPPP). The segment covering 3440 to 3463 (ASGSFSTSSAMSPSFSPSLSPLAT) has biased composition (low complexity). Phosphoserine is present on residues serine 3465 and serine 3469. The segment covering 3492-3503 (QPSQRGNVGTRM) has biased composition (polar residues).

As to quaternary structure, interacts (via cytoplasmic region) with Myo31DF. Post-translationally, phosphorylated by fj on Ser/Thr of cadherin domains. Expressed in embryonic ectoderm. In larvae, expression is restricted to imaginal disks and brain.

It is found in the cell membrane. The protein resides in the cell junction. Its function is as follows. Required for normal morphogenesis of adult structures derived from imaginal disks. Plays a role in planar cell polarity and in determining body left-right asymmetry. Expression in segment H1 of the imaginal ring and interaction with Myo31DF are required to induce changes of cell shape and orientation in segment H2, which then gives rise to normal, dextral looping of the adult hindgut. In Drosophila melanogaster (Fruit fly), this protein is Protein dachsous (ds).